A 688-amino-acid chain; its full sequence is GTPase IMAP family member 8 (688 aa).

Low complexity predominate over residues 1-14; the sequence is MATSSHQGAAAGSQ. Residues 1-42 form a disordered region; the sequence is MATSSHQGAAAGSQAEHRSCEASVGQGERPSASQGQEGNFKQ. A compositionally biased stretch (polar residues) spans 31–42; that stretch reads SASQGQEGNFKQ. 3 consecutive AIG1-type G domains span residues 46-247, 282-472, and 473-677; these read TSTL…MESS, MPEL…VIRE, and KELL…GQLK. The G1 stretch occupies residues 55 to 62; that stretch reads GKQGAGKS. GTP is bound by residues 55-63 and Ser76; that span reads GKQGAGKSA. The G2 stretch occupies residues 82–86; the sequence is MVTDR. The G3 stretch occupies residues 103-106; that stretch reads DTPD. Residues 172–175 are G4; sequence TRED. Residues 173 to 175 and Asn209 each bind GTP; that span reads RED. The interval 208–210 is G5; the sequence is NNK.

Belongs to the TRAFAC class TrmE-Era-EngA-EngB-Septin-like GTPase superfamily. AIG1/Toc34/Toc159-like paraseptin GTPase family. IAN subfamily. Abundantly expressed in the thymus (in thymocytes), spleen (in splenocytes), lymph node, followed by bone marrow and lung.

It localises to the endoplasmic reticulum. It is found in the golgi apparatus. The protein localises to the mitochondrion. Its subcellular location is the cytoplasm. The protein resides in the cytosol. In terms of biological role, exerts an anti-apoptotic effect in the immune system and is involved in responses to infections. This Mus musculus (Mouse) protein is GTPase IMAP family member 8 (Gimap8).